The sequence spans 926 residues: Disease resistance protein RPM1 (926 aa).

Positions Ile10 to Leu45 are leucine-zipper. Positions Asp153–Gly467 constitute an NB-ARC domain. Gly200–Thr207 contributes to the ATP binding site. 11 LRR repeats span residues Leu561–Leu580, Asn581–Met603, Asn605–Lys625, Leu626–Leu649, Leu686–Gln707, Leu708–Ile731, Thr756–Thr777, Leu778–Arg804, Phe825–Met836, Lys837–Ala859, and Leu876–Arg900.

Belongs to the disease resistance NB-LRR family. In terms of assembly, interacts directly with RIN4 via its N-terminal region. Interacts (via N-terminus) with RIN2 and RIN3 (via C-terminus). Interacts with TIP49A, a protein known to interact with the TATA binding protein complex (TBP). Binds to MORC1/CRT1. Interacts, via its NB-ARC domain, with RIN13.

Its subcellular location is the endomembrane system. The protein resides in the cell membrane. In terms of biological role, disease resistance (R) protein that specifically recognizes the AvrRpm1 type III effector avirulence protein from Pseudomonas syringae. Resistance proteins guard the plant against pathogens that contain an appropriate avirulence protein via an indirect interaction with this avirulence protein. That triggers a defense system including the hypersensitive response (HR), which restricts the pathogen growth. Acts via its interaction with RIN4, and probably triggers the plant resistance when RIN4 is phosphorylated by AvrRpm1. It is then degraded at the onset of the hypersensitive response. In Arabidopsis thaliana (Mouse-ear cress), this protein is Disease resistance protein RPM1.